Consider the following 106-residue polypeptide: Putative regulatory protein MalR (106 aa).

An HTH hxlR-type domain is found at 12-106 (CSIEYTLSFM…NLMHKWGQEN (95 aa)).

Functionally, potential regulator of the malBH genes. The protein is Putative regulatory protein MalR (malR) of Fusobacterium mortiferum.